The sequence spans 507 residues: Fluoroacetaldehyde dehydrogenase (507 aa).

An NAD(+)-binding site is contributed by 219–225 (GFGIEAG). Active-site residues include Glu263 and Cys302.

This sequence belongs to the aldehyde dehydrogenase family. As to quaternary structure, homotetramer.

It catalyses the reaction fluoroacetaldehyde + NAD(+) + H2O = fluoroacetate + NADH + 2 H(+). Functionally, catalyzes the oxidation of fluoroacetaldehyde to fluoroacetate. Has high affinity for fluoroacetate and glycolaldehyde but not for acetaldehyde. The chain is Fluoroacetaldehyde dehydrogenase from Streptantibioticus cattleyicolor (strain ATCC 35852 / DSM 46488 / JCM 4925 / NBRC 14057 / NRRL 8057) (Streptomyces cattleya).